The chain runs to 199 residues: Extracellular superoxide dismutase [Cu-Zn] (199 aa).

Residues 1-20 (MMIASFAIFLSHIIFITYAT) form the signal peptide. Asn33, Asn60, and Asn70 each carry an N-linked (GlcNAc...) asparagine glycan. Residues His89, His91, and His106 each contribute to the Cu cation site. Cys100 and Cys192 are joined by a disulfide. Position 106 (His106) interacts with Zn(2+). A glycan (N-linked (GlcNAc...) asparagine) is linked at Asn111. Residues His114, His123, and Asp126 each contribute to the Zn(2+) site. His163 provides a ligand contact to Cu cation.

It belongs to the Cu-Zn superoxide dismutase family. In terms of assembly, homodimer. It depends on Cu cation as a cofactor. Requires Zn(2+) as cofactor.

It is found in the secreted. The protein resides in the extracellular space. The catalysed reaction is 2 superoxide + 2 H(+) = H2O2 + O2. Its function is as follows. Protect the extracellular space from toxic effect of reactive oxygen intermediates by converting superoxide radicals into hydrogen peroxide and oxygen. May act in the parasite defense by neutralizing superoxide generated by activated leukocytes, thus acting as both an antioxidant and an anti-inflammatory factor. In Brugia pahangi (Filarial nematode worm), this protein is Extracellular superoxide dismutase [Cu-Zn].